Reading from the N-terminus, the 577-residue chain is 2-hydroxyacyl-CoA lyase (577 aa).

Glu59 lines the thiamine diphosphate pocket. The interval 412 to 493 (TMDVGRAVLV…VIVFNNNGVY (82 aa)) is thiamine pyrophosphate binding. Positions 462 and 489 each coordinate Mg(2+).

The protein belongs to the TPP enzyme family. Homotetramer. Mg(2+) serves as cofactor. It depends on thiamine diphosphate as a cofactor.

It carries out the reaction an (R)-2-hydroxy-long-chain-fatty acyl-CoA = a long-chain fatty aldehyde + formyl-CoA. The catalysed reaction is a 2-hydroxy-3-methyl fatty acyl-CoA = a 2-methyl-branched fatty aldehyde + formyl-CoA. In terms of biological role, catalyzes a carbon-carbon cleavage reaction; cleaves a 2-hydroxy-3-methylacyl-CoA into formyl-CoA and a 2-methyl-branched fatty aldehyde. The chain is 2-hydroxyacyl-CoA lyase from Oryza sativa subsp. japonica (Rice).